We begin with the raw amino-acid sequence, 534 residues long: ATP synthase subunit beta 2 (534 aa).

Polar residues predominate over residues 1 to 10 (MADPQATNGT). The interval 1 to 30 (MADPQATNGTGAACAERDASDVGDVSDVGD) is disordered. 185–192 (GGAGVGKT) contributes to the ATP binding site. Residues 494–505 (AAAREADARREA) show a composition bias toward basic and acidic residues. The segment at 494 to 534 (AAAREADARREAAAAASGAGPGTTSDPASGSAEPQGARHGR) is disordered.

The protein belongs to the ATPase alpha/beta chains family. In terms of assembly, F-type ATPases have 2 components, CF(1) - the catalytic core - and CF(0) - the membrane proton channel. CF(1) has five subunits: alpha(3), beta(3), gamma(1), delta(1), epsilon(1). CF(0) has three main subunits: a(1), b(2) and c(9-12). The alpha and beta chains form an alternating ring which encloses part of the gamma chain. CF(1) is attached to CF(0) by a central stalk formed by the gamma and epsilon chains, while a peripheral stalk is formed by the delta and b chains.

Its subcellular location is the cell inner membrane. The enzyme catalyses ATP + H2O + 4 H(+)(in) = ADP + phosphate + 5 H(+)(out). Its function is as follows. Produces ATP from ADP in the presence of a proton gradient across the membrane. The catalytic sites are hosted primarily by the beta subunits. The polypeptide is ATP synthase subunit beta 2 (Burkholderia pseudomallei (strain 668)).